A 468-amino-acid polypeptide reads, in one-letter code: PTS system mannitol-specific EIICB component (468 aa).

Residues 1-25 lie on the Cytoplasmic side of the membrane; it reads MNNQPSFRARVQKFGSFLSGMIMPN. A PTS EIIC type-2 domain is found at 14-344; the sequence is FGSFLSGMIM…ILKTSKATAE (331 aa). Residues 26–47 traverse the membrane as a helical segment; that stretch reads IGAFIAWGLITALFIPTGWWPN. Residues 48–51 lie on the Extracellular side of the membrane; it reads EQLA. Residues 52-72 form a helical membrane-spanning segment; that stretch reads ELVGPMITYLLPLLIGYTGGK. Residues 73–135 are Cytoplasmic-facing; the sequence is MIYDVRGGVV…SGFEMLVNNF (63 aa). A helical membrane pass occupies residues 136-157; that stretch reads SAGILAAILAIVAFLGIGPVVV. Over 158–166 the chain is Extracellular; it reads SFSNVLASG. A helical transmembrane segment spans residues 167 to 187; that stretch reads VEVIIGAGLLPLASIFIEPAK. Over 188–274 the chain is Cytoplasmic; that stretch reads VLFLNNAINH…ILMKPTLILA (87 aa). A helical transmembrane segment spans residues 275–294; that stretch reads VIAGGMSGVFTFVLFNAGLV. The Extracellular portion of the chain corresponds to 295 to 314; the sequence is AVPSPGSIFALLAMTPRGEY. The helical transmembrane segment at 315–336 threads the bilayer; sequence AGVLAGVIIATVVSFVIASIIL. Over 337-468 the chain is Cytoplasmic; sequence KTSKATAEDL…YDELVNRLKS (132 aa). Positions 380-468 constitute a PTS EIIB type-2 domain; sequence NKIIFACDAG…YDELVNRLKS (89 aa). Cysteine 386 acts as the Phosphocysteine intermediate; for EIIB activity in catalysis. Cysteine 386 carries the post-translational modification Phosphocysteine; by EIIA.

As to quaternary structure, homodimer.

It localises to the cell membrane. It carries out the reaction D-mannitol(out) + N(pros)-phospho-L-histidyl-[protein] = D-mannitol 1-phosphate(in) + L-histidyl-[protein]. In terms of biological role, the phosphoenolpyruvate-dependent sugar phosphotransferase system (sugar PTS), a major carbohydrate active transport system, catalyzes the phosphorylation of incoming sugar substrates concomitantly with their translocation across the cell membrane. The enzyme II CmtAB PTS system is involved in D-mannitol transport. In Halalkalibacterium halodurans (strain ATCC BAA-125 / DSM 18197 / FERM 7344 / JCM 9153 / C-125) (Bacillus halodurans), this protein is PTS system mannitol-specific EIICB component (mtlA).